A 585-amino-acid chain; its full sequence is Arginine--tRNA ligase (585 aa).

The 'HIGH' region signature appears at 130-140 (ANPTGPMHVGH).

The protein belongs to the class-I aminoacyl-tRNA synthetase family. As to quaternary structure, monomer.

Its subcellular location is the cytoplasm. It catalyses the reaction tRNA(Arg) + L-arginine + ATP = L-arginyl-tRNA(Arg) + AMP + diphosphate. In Methylorubrum extorquens (strain PA1) (Methylobacterium extorquens), this protein is Arginine--tRNA ligase.